We begin with the raw amino-acid sequence, 499 residues long: Probable cytosol aminopeptidase (499 aa).

2 residues coordinate Mn(2+): Lys264 and Asp269. Residue Lys276 is part of the active site. Residues Asp287, Asp346, and Glu348 each coordinate Mn(2+). Arg350 is an active-site residue.

Belongs to the peptidase M17 family. Mn(2+) serves as cofactor.

It is found in the cytoplasm. The enzyme catalyses Release of an N-terminal amino acid, Xaa-|-Yaa-, in which Xaa is preferably Leu, but may be other amino acids including Pro although not Arg or Lys, and Yaa may be Pro. Amino acid amides and methyl esters are also readily hydrolyzed, but rates on arylamides are exceedingly low.. It catalyses the reaction Release of an N-terminal amino acid, preferentially leucine, but not glutamic or aspartic acids.. Presumably involved in the processing and regular turnover of intracellular proteins. Catalyzes the removal of unsubstituted N-terminal amino acids from various peptides. This chain is Probable cytosol aminopeptidase, found in Rhodopseudomonas palustris (strain BisB18).